The chain runs to 100 residues: NADH-quinone oxidoreductase subunit K (100 aa).

A run of 3 helical transmembrane segments spans residues 4-24 (FEYY…GVII), 28-48 (IIAM…AFVA), and 61-81 (FVFF…GLII).

It belongs to the complex I subunit 4L family. In terms of assembly, NDH-1 is composed of 14 different subunits. Subunits NuoA, H, J, K, L, M, N constitute the membrane sector of the complex.

It localises to the cell inner membrane. The catalysed reaction is a quinone + NADH + 5 H(+)(in) = a quinol + NAD(+) + 4 H(+)(out). In terms of biological role, NDH-1 shuttles electrons from NADH, via FMN and iron-sulfur (Fe-S) centers, to quinones in the respiratory chain. The immediate electron acceptor for the enzyme in this species is believed to be ubiquinone. Couples the redox reaction to proton translocation (for every two electrons transferred, four hydrogen ions are translocated across the cytoplasmic membrane), and thus conserves the redox energy in a proton gradient. The sequence is that of NADH-quinone oxidoreductase subunit K from Sulfurihydrogenibium sp. (strain YO3AOP1).